Reading from the N-terminus, the 291-residue chain is Ribosomal RNA small subunit methyltransferase H (291 aa).

S-adenosyl-L-methionine-binding positions include 36–38 (GGH), D55, A90, D102, and Q109.

Belongs to the methyltransferase superfamily. RsmH family.

It localises to the cytoplasm. It carries out the reaction cytidine(1402) in 16S rRNA + S-adenosyl-L-methionine = N(4)-methylcytidine(1402) in 16S rRNA + S-adenosyl-L-homocysteine + H(+). Its function is as follows. Specifically methylates the N4 position of cytidine in position 1402 (C1402) of 16S rRNA. The polypeptide is Ribosomal RNA small subunit methyltransferase H (Thermosipho africanus (strain TCF52B)).